We begin with the raw amino-acid sequence, 280 residues long: Diaminopimelate epimerase (280 aa).

2 residues coordinate substrate: N13 and N66. C75 functions as the Proton donor in the catalytic mechanism. Residues 76 to 77, N162, N195, and 213 to 214 contribute to the substrate site; these read GN and ER. C222 functions as the Proton acceptor in the catalytic mechanism. A substrate-binding site is contributed by 223–224; the sequence is GT.

Belongs to the diaminopimelate epimerase family. In terms of assembly, homodimer.

The protein resides in the cytoplasm. It catalyses the reaction (2S,6S)-2,6-diaminopimelate = meso-2,6-diaminopimelate. It participates in amino-acid biosynthesis; L-lysine biosynthesis via DAP pathway; DL-2,6-diaminopimelate from LL-2,6-diaminopimelate: step 1/1. Catalyzes the stereoinversion of LL-2,6-diaminopimelate (L,L-DAP) to meso-diaminopimelate (meso-DAP), a precursor of L-lysine and an essential component of the bacterial peptidoglycan. The polypeptide is Diaminopimelate epimerase (Synechococcus elongatus (strain ATCC 33912 / PCC 7942 / FACHB-805) (Anacystis nidulans R2)).